We begin with the raw amino-acid sequence, 453 residues long: HTH-type pyridoxine biosynthesis transcriptional regulator PdxR (453 aa).

The region spanning 15–83 (TSIPTQLTEQ…RGSGTTINPD (69 aa)) is the HTH gntR-type domain. A DNA-binding region (H-T-H motif) is located at residues 43 to 62 (SRSLSTQLGVSRGSVVTAYD).

It in the C-terminal section; belongs to the class-I pyridoxal-phosphate-dependent aminotransferase family. It depends on pyridoxal 5'-phosphate as a cofactor.

In terms of biological role, may have a regulatory function in pyridoxine biosynthesis. Is said to also have an aminotransferase activity in valine biosynthesis as a double inactivation of ilvE and pdxR results in an auxotrophic requirement for valine. In Corynebacterium glutamicum (strain ATCC 13032 / DSM 20300 / JCM 1318 / BCRC 11384 / CCUG 27702 / LMG 3730 / NBRC 12168 / NCIMB 10025 / NRRL B-2784 / 534), this protein is HTH-type pyridoxine biosynthesis transcriptional regulator PdxR (pdxR).